The sequence spans 240 residues: TATA-box-binding protein (240 aa).

The disordered stretch occupies residues 21-61; sequence NTRQVWENQNRDGTKPATTFQSEEDIKRAAPESEKDTSATS. Residues 44 to 57 show a composition bias toward basic and acidic residues; that stretch reads EDIKRAAPESEKDT. 2 consecutive repeat copies span residues 67–143 and 157–234.

This sequence belongs to the TBP family. In terms of assembly, binds DNA as monomer. The 1.2 MDa TFIID complex is composed of TATA binding protein (TBP) and the 14 TBP-associated factors. One copy of each TAF1, TAF2, TAF3, TAF7, TAF8, TAF11, TAF13, two copies of each TAF4, TAF5, TAF6, TAF9, TAF10, TAF12, and three copies of TAF14. Interacts with TFC8.

Its subcellular location is the nucleus. Functionally, general transcription factor that functions at the core of the DNA-binding general transcription factor complex TFIID. Binding of TFIID to a promoter (with or without TATA element) is the initial step in preinitiation complex (PIC) formation. TFIID plays a key role in the regulation of gene expression by RNA polymerase II through different activities such as transcription activator interaction, core promoter recognition and selectivity, TFIIA and TFIIB interaction, chromatin modification (histone acetylation by TAF1), facilitation of DNA opening and initiation of transcription. This chain is TATA-box-binding protein (SPT15), found in Saccharomyces cerevisiae (strain ATCC 204508 / S288c) (Baker's yeast).